A 205-amino-acid chain; its full sequence is Small ribosomal subunit protein mS26 (205 aa).

Residues 1–26 constitute a mitochondrion transit peptide; that stretch reads MLRALSTLGARPLGRPPAQFLLLARG.

This sequence belongs to the mitochondrion-specific ribosomal protein mS26 family. As to quaternary structure, component of the mitochondrial ribosome small subunit (28S) which comprises a 12S rRNA and about 30 distinct proteins.

The protein resides in the mitochondrion. This chain is Small ribosomal subunit protein mS26 (MRPS26), found in Bos taurus (Bovine).